The following is a 55-amino-acid chain: Large ribosomal subunit protein bL33 (55 aa).

It belongs to the bacterial ribosomal protein bL33 family.

This is Large ribosomal subunit protein bL33 from Azoarcus sp. (strain BH72).